The primary structure comprises 229 residues: 23 kDa piroplasm membrane protein (229 aa).

The N-terminal stretch at 1–19 (MNKYFKVFFFVLLTHALKS) is a signal peptide. The Extracellular segment spans residues 20–203 (ALIFGQATLQ…EKEDTNKKKY (184 aa)). Residues 204–224 (VLMVVVVVVFVVVASLVVFLV) traverse the membrane as a helical segment. Residues 225-229 (KFCLK) are Cytoplasmic-facing.

It localises to the membrane. The polypeptide is 23 kDa piroplasm membrane protein (Theileria parva (East coast fever infection agent)).